Reading from the N-terminus, the 526-residue chain is O-phosphoserine--tRNA(Cys) ligase (526 aa).

Residues 189–191 (HMT), 234–236 (SAS), 276–277 (YY), and Asn-319 contribute to the substrate site.

This sequence belongs to the class-II aminoacyl-tRNA synthetase family. O-phosphoseryl-tRNA(Cys) synthetase subfamily. In terms of assembly, homotetramer. Interacts with SepCysS.

The enzyme catalyses tRNA(Cys) + O-phospho-L-serine + ATP = O-phospho-L-seryl-tRNA(Cys) + AMP + diphosphate. Its function is as follows. Catalyzes the attachment of O-phosphoserine (Sep) to tRNA(Cys). In Methanocorpusculum labreanum (strain ATCC 43576 / DSM 4855 / Z), this protein is O-phosphoserine--tRNA(Cys) ligase.